A 679-amino-acid chain; its full sequence is Glycine--tRNA ligase beta subunit (679 aa).

It belongs to the class-II aminoacyl-tRNA synthetase family. Tetramer of two alpha and two beta subunits.

It localises to the cytoplasm. The enzyme catalyses tRNA(Gly) + glycine + ATP = glycyl-tRNA(Gly) + AMP + diphosphate. This is Glycine--tRNA ligase beta subunit from Streptococcus pyogenes serotype M6 (strain ATCC BAA-946 / MGAS10394).